The following is a 220-amino-acid chain: MKLNKYIDHTLLKQDAKKKQIDSLLSEAREYGFASVCVNPTWVEHAKKGLEGTDVKVCTVVGFPLGATTSAVKAFETKEAIQNGADEIDMVINVGALKSGNLALVESDIRAVVEASGDKLVKVIIEACLLTDQEKVVVCQLAQKAGADFVKTSTGFSTGGATIADVTLMRETVGSDMGVKAAGGARSYADALAFVEAGATRIGTSAGVAILKGELADGDY.

Residue D89 is the Proton donor/acceptor of the active site. Residue K151 is the Schiff-base intermediate with acetaldehyde of the active site. K180 acts as the Proton donor/acceptor in catalysis.

The protein belongs to the DeoC/FbaB aldolase family. DeoC type 1 subfamily.

Its subcellular location is the cytoplasm. It catalyses the reaction 2-deoxy-D-ribose 5-phosphate = D-glyceraldehyde 3-phosphate + acetaldehyde. The protein operates within carbohydrate degradation; 2-deoxy-D-ribose 1-phosphate degradation; D-glyceraldehyde 3-phosphate and acetaldehyde from 2-deoxy-alpha-D-ribose 1-phosphate: step 2/2. In terms of biological role, catalyzes a reversible aldol reaction between acetaldehyde and D-glyceraldehyde 3-phosphate to generate 2-deoxy-D-ribose 5-phosphate. This is Deoxyribose-phosphate aldolase from Streptococcus pneumoniae (strain CGSP14).